We begin with the raw amino-acid sequence, 551 residues long: Scaffold protein OPG125 (551 aa).

It belongs to the orthopoxvirus protein OPG125 family. In terms of assembly, homotrimer. Self-assembles to form a layer. Interacts with OPG158 (via N-terminus); this interaction is necessary for OPG125 association with membranes.

It is found in the membrane. Scaffold protein which forms a transitory spherical honeycomb lattice providing curvature and rigidity to the convex membrane of crescent and immature virions (IV). This association occurs concomitantly with viral membrane formation. Targeted by the drug rifampicin, which prevents the formation of this lattice, and hence virus morphogenesis. In the presence of rifampicin, irregularly shaped membranes that lack the honeycomb layer accumulate around areas of electron-dense viroplasm. This layer is lost from virions during maturation from IV to mature virion (MV), through the proteolysis of OPG158 N-terminus. The sequence is that of Scaffold protein OPG125 (OPG125) from Homo sapiens (Human).